We begin with the raw amino-acid sequence, 336 residues long: HTH-type transcriptional repressor PurR (336 aa).

An HTH lacI-type domain is found at 2–56; that stretch reads ATIKDVAKMAGVSTTTVSHVINKTRFVAKDTEEAVLSAIKQLNYSPSAVARSLKV. A DNA-binding region (H-T-H motif) is located at residues 4-23; the sequence is IKDVAKMAGVSTTTVSHVIN. The DNA-binding element occupies 48–56; that stretch reads SAVARSLKV. Residues Tyr-73, Lys-188, Thr-190, Phe-219, and Asp-273 each coordinate hypoxanthine.

As to quaternary structure, homodimer.

Its pathway is purine metabolism; purine nucleotide biosynthesis [regulation]. In terms of biological role, is the main repressor of the genes involved in the de novo synthesis of purine nucleotides, regulating purB, purC, purEK, purF, purHD, purL, purMN and guaBA expression. PurR is allosterically activated to bind its cognate DNA by binding the purine corepressors, hypoxanthine or guanine, thereby effecting transcription repression. This chain is HTH-type transcriptional repressor PurR, found in Haemophilus influenzae (strain PittGG).